The chain runs to 215 residues: Protein Ac34 (215 aa).

Interacts with host proteins P40, P34 ands P20.

It localises to the host nucleus. Its function is as follows. Plays a role in the translocation of the P40 subunit of host Arp2/3 to the nucleus. The robust nuclear accumulation of Arp2/3 induces nuclear actin polymerization to assist in virus replication. Mechanistically, subverts the host CRM1-dependent nuclear export pathway leading to Arp2/3 acumulation in the host nucleus. This Autographa californica nuclear polyhedrosis virus (AcMNPV) protein is Protein Ac34 (Ac34).